The following is a 293-amino-acid chain: Putative ribose uptake protein RbsU (293 aa).

A run of 10 helical transmembrane segments spans residues 2-24 (SIVALLIGLGPLIGWGFFPTVAS), 34-56 (IIGATVGTLIFAIILAVVTSSGF), 63-80 (LFALLSGAGWGFGQIITF), 95-117 (TTAFQLLGASLWGVFALGNWPGI), 122-139 (IGFTALVVILIGARMTVW), 154-171 (AVVLLLIGEFGYWLYSAA), 180-202 (LTAFLPQAMGMVIVAVIYGFMNM), 212-234 (ITWLQIISGFFFAFGALTYLISA), 241-263 (LATGFILSQTSVVLATLTGIYFL), and 273-292 (VITIIGLVLILVAASVTVFI).

This sequence belongs to the GRP transporter (TC 2.A.7.5) family.

The protein localises to the cell membrane. Its function is as follows. Could be involved in the uptake of ribose. This Staphylococcus aureus (strain Mu50 / ATCC 700699) protein is Putative ribose uptake protein RbsU (rbsU).